Consider the following 179-residue polypeptide: Large ribosomal subunit protein uL6 (179 aa).

This sequence belongs to the universal ribosomal protein uL6 family. As to quaternary structure, part of the 50S ribosomal subunit.

In terms of biological role, this protein binds to the 23S rRNA, and is important in its secondary structure. It is located near the subunit interface in the base of the L7/L12 stalk, and near the tRNA binding site of the peptidyltransferase center. This Clostridium perfringens (strain ATCC 13124 / DSM 756 / JCM 1290 / NCIMB 6125 / NCTC 8237 / Type A) protein is Large ribosomal subunit protein uL6.